The sequence spans 595 residues: Cardiolipin synthase (CMP-forming) / mitochondrial hydrolase fusion protein (595 aa).

The transit peptide at 1 to 24 (MLHTINYRSWHLAARQLGRSTFRK) directs the protein to the mitochondrion. 2 consecutive transmembrane segments (helical) span residues 538-560 (ALQL…ASFA) and 564-586 (LFYI…RNTF).

It in the N-terminal section; belongs to the HAD-like hydrolase superfamily. The protein in the C-terminal section; belongs to the CDP-alcohol phosphatidyltransferase class-I family. Mg(2+) is required as a cofactor. Proteolytically cleaved, presumably during its import into the mitochondrion by mitochondrial processing peptidase.

Its subcellular location is the mitochondrion. The protein resides in the mitochondrion inner membrane. The enzyme catalyses a CDP-1,2-diacyl-sn-glycerol + a 1,2-diacyl-sn-glycero-3-phospho-(1'-sn-glycerol) = a cardiolipin + CMP + H(+). Catalyzes the synthesis of cardiolipin (CL) (diphosphatidylglycerol) by specifically transferring a phosphatidyl group from CDP-diacylglycerol to phosphatidylglycerol (PG). CL is a key phospholipid in mitochondrial membranes and plays important roles in maintaining the functional integrity and dynamics of mitochondria under both optimal and stress conditions. In terms of biological role, activity is dispensable for viability. This is Cardiolipin synthase (CMP-forming) / mitochondrial hydrolase fusion protein from Schizosaccharomyces pombe (strain 972 / ATCC 24843) (Fission yeast).